Consider the following 248-residue polypeptide: MAGHSKWANIKHRKERQDAKRGKIFTKWIRELTVAARQGGGDPGSNPRLRLALDKALGANMSRDIIDRAVARGAGATEADNVEELTYEGYGPGGVAVMVECMTDNRNRTAAAVRHAFSKCGGNLGTDGSVAYLFERKGQISFAPGVDEDALTEAALEADADDVVSHEDGSIDVFTSFTSFYAVRNALEAAGFKGDDAEIVMQPTTSAELDLEGAEKVLKLIDMLEDLDDVQNVYSNADIPEDVAAQLG.

This sequence belongs to the TACO1 family.

It is found in the cytoplasm. The protein is Probable transcriptional regulatory protein Pfl01_4410 of Pseudomonas fluorescens (strain Pf0-1).